We begin with the raw amino-acid sequence, 31 residues long: Kappa-sparatoxin-Hv1c (31 aa).

3 disulfides stabilise this stretch: Cys-2-Cys-16, Cys-9-Cys-21, and Cys-15-Cys-25. Position 31 is a tryptophan amide (Trp-31).

As to expression, expressed by the venom gland.

It localises to the secreted. Its function is as follows. Blocks transient outward voltage-gated potassium channels in rat ventricular myocytes (thus prolonging action-potential duration) and rat Kv4.2/KCNA4 channels expressed in Xenopus oocytes. Is also a weak blocker of calcium channels in rat cerebellar granule cells. This Heteropoda venatoria (Brown huntsman spider) protein is Kappa-sparatoxin-Hv1c.